The sequence spans 230 residues: Demethylmenaquinone methyltransferase (230 aa).

S-adenosyl-L-methionine contacts are provided by residues Thr62, Asp80, 100-101 (DG), and Ser117.

The protein belongs to the class I-like SAM-binding methyltransferase superfamily. MenG/UbiE family.

It carries out the reaction a 2-demethylmenaquinol + S-adenosyl-L-methionine = a menaquinol + S-adenosyl-L-homocysteine + H(+). It participates in quinol/quinone metabolism; menaquinone biosynthesis; menaquinol from 1,4-dihydroxy-2-naphthoate: step 2/2. In terms of biological role, methyltransferase required for the conversion of demethylmenaquinol (DMKH2) to menaquinol (MKH2). The protein is Demethylmenaquinone methyltransferase of Corynebacterium glutamicum (strain R).